The chain runs to 565 residues: Oxygen-dependent choline dehydrogenase (565 aa).

D6–E35 provides a ligand contact to FAD. H475 (proton acceptor) is an active-site residue.

It belongs to the GMC oxidoreductase family. FAD serves as cofactor.

It catalyses the reaction choline + A = betaine aldehyde + AH2. It carries out the reaction betaine aldehyde + NAD(+) + H2O = glycine betaine + NADH + 2 H(+). It participates in amine and polyamine biosynthesis; betaine biosynthesis via choline pathway; betaine aldehyde from choline (cytochrome c reductase route): step 1/1. Functionally, involved in the biosynthesis of the osmoprotectant glycine betaine. Catalyzes the oxidation of choline to betaine aldehyde and betaine aldehyde to glycine betaine at the same rate. The polypeptide is Oxygen-dependent choline dehydrogenase (Pseudomonas putida (strain ATCC 700007 / DSM 6899 / JCM 31910 / BCRC 17059 / LMG 24140 / F1)).